Reading from the N-terminus, the 40-residue chain is Large ribosomal subunit protein bL36B (40 aa).

The protein belongs to the bacterial ribosomal protein bL36 family.

The polypeptide is Large ribosomal subunit protein bL36B (Arthrobacter sp. (strain FB24)).